The chain runs to 571 residues: Proline--tRNA ligase (571 aa).

This sequence belongs to the class-II aminoacyl-tRNA synthetase family. ProS type 1 subfamily. Homodimer.

The protein resides in the cytoplasm. It catalyses the reaction tRNA(Pro) + L-proline + ATP = L-prolyl-tRNA(Pro) + AMP + diphosphate. Functionally, catalyzes the attachment of proline to tRNA(Pro) in a two-step reaction: proline is first activated by ATP to form Pro-AMP and then transferred to the acceptor end of tRNA(Pro). As ProRS can inadvertently accommodate and process non-cognate amino acids such as alanine and cysteine, to avoid such errors it has two additional distinct editing activities against alanine. One activity is designated as 'pretransfer' editing and involves the tRNA(Pro)-independent hydrolysis of activated Ala-AMP. The other activity is designated 'posttransfer' editing and involves deacylation of mischarged Ala-tRNA(Pro). The misacylated Cys-tRNA(Pro) is not edited by ProRS. This is Proline--tRNA ligase from Pasteurella multocida (strain Pm70).